A 335-amino-acid chain; its full sequence is Pyridoxal 5'-phosphate synthase subunit PdxS (335 aa).

D30 serves as a coordination point for D-ribose 5-phosphate. K87 serves as the catalytic Schiff-base intermediate with D-ribose 5-phosphate. G159 contacts D-ribose 5-phosphate. Residue R171 participates in D-glyceraldehyde 3-phosphate binding. Residues G257 and 278 to 279 (GS) each bind D-ribose 5-phosphate.

Belongs to the PdxS/SNZ family. In terms of assembly, in the presence of PdxT, forms a dodecamer of heterodimers.

It catalyses the reaction aldehydo-D-ribose 5-phosphate + D-glyceraldehyde 3-phosphate + L-glutamine = pyridoxal 5'-phosphate + L-glutamate + phosphate + 3 H2O + H(+). The protein operates within cofactor biosynthesis; pyridoxal 5'-phosphate biosynthesis. Functionally, catalyzes the formation of pyridoxal 5'-phosphate from ribose 5-phosphate (RBP), glyceraldehyde 3-phosphate (G3P) and ammonia. The ammonia is provided by the PdxT subunit. Can also use ribulose 5-phosphate and dihydroxyacetone phosphate as substrates, resulting from enzyme-catalyzed isomerization of RBP and G3P, respectively. The sequence is that of Pyridoxal 5'-phosphate synthase subunit PdxS from Thermococcus onnurineus (strain NA1).